A 428-amino-acid chain; its full sequence is Adenylosuccinate synthetase (428 aa).

GTP-binding positions include 12–18 (GDEGKGK) and 40–42 (GHT). Catalysis depends on aspartate 13, which acts as the Proton acceptor. Mg(2+) contacts are provided by aspartate 13 and glycine 40. Residues 13–16 (DEGK), 38–41 (NAGH), threonine 130, arginine 144, glutamine 225, threonine 240, and arginine 304 each bind IMP. Histidine 41 serves as the catalytic Proton donor. 300 to 306 (VTTGRAR) is a substrate binding site. Residues arginine 306, 332 to 334 (KID), and 414 to 416 (SVG) contribute to the GTP site.

The protein belongs to the adenylosuccinate synthetase family. Homodimer. It depends on Mg(2+) as a cofactor.

It localises to the cytoplasm. The enzyme catalyses IMP + L-aspartate + GTP = N(6)-(1,2-dicarboxyethyl)-AMP + GDP + phosphate + 2 H(+). The protein operates within purine metabolism; AMP biosynthesis via de novo pathway; AMP from IMP: step 1/2. Its function is as follows. Plays an important role in the de novo pathway of purine nucleotide biosynthesis. Catalyzes the first committed step in the biosynthesis of AMP from IMP. This is Adenylosuccinate synthetase from Clostridium botulinum (strain Loch Maree / Type A3).